Here is a 358-residue protein sequence, read N- to C-terminus: Phenylalanine--tRNA ligase alpha subunit (358 aa).

Glu-262 serves as a coordination point for Mg(2+).

The protein belongs to the class-II aminoacyl-tRNA synthetase family. Phe-tRNA synthetase alpha subunit type 1 subfamily. In terms of assembly, tetramer of two alpha and two beta subunits. The cofactor is Mg(2+).

The protein resides in the cytoplasm. The catalysed reaction is tRNA(Phe) + L-phenylalanine + ATP = L-phenylalanyl-tRNA(Phe) + AMP + diphosphate + H(+). The polypeptide is Phenylalanine--tRNA ligase alpha subunit (pheS) (Streptomyces coelicolor (strain ATCC BAA-471 / A3(2) / M145)).